A 77-amino-acid chain; its full sequence is U8-lycotoxin-Ls1u (77 aa).

The signal sequence occupies residues 1-20 (MKLIIFTGLVLFAIVSLIEA). Residues 21–26 (QAENEK) constitute a propeptide that is removed on maturation.

It belongs to the neurotoxin 19 (CSTX) family. 08 (U8-Lctx) subfamily. In terms of processing, contains 4 disulfide bonds. In terms of tissue distribution, expressed by the venom gland.

The protein resides in the secreted. This is U8-lycotoxin-Ls1u from Lycosa singoriensis (Wolf spider).